A 338-amino-acid polypeptide reads, in one-letter code: uncharacterized protein (338 aa).

Residues 20 to 40 (IFFTLTFSLSNLFLAICYLFL) form a helical membrane-spanning segment.

Its subcellular location is the membrane. This is an uncharacterized protein from Schizosaccharomyces pombe (strain 972 / ATCC 24843) (Fission yeast).